A 171-amino-acid polypeptide reads, in one-letter code: Spiderine-2a (171 aa).

The signal sequence occupies residues methionine 1–alanine 18. Positions threonine 19 to arginine 58 are cleaved as a propeptide — removed in mature form. The interval lysine 59–leucine 104 is linear cationic cytotoxin domain. Positions asparagine 118–glutamate 171 constitute an Oxytoxin-type inhibitor cystine knot (ICK) domain. Cystine bridges form between cysteine 121-cysteine 135, cysteine 128-cysteine 140, cysteine 132-cysteine 167, cysteine 134-cysteine 156, and cysteine 142-cysteine 154.

Disulfide bonds. Expressed by the venom gland.

Its subcellular location is the secreted. In terms of biological role, has antimicrobial, insecticidal, cytolytic and cytotoxic activity. This is Spiderine-2a from Oxyopes takobius (Lynx spider).